We begin with the raw amino-acid sequence, 336 residues long: 3-isopropylmalate dehydrogenase (336 aa).

Substrate contacts are provided by Arg-87, Arg-97, Arg-121, and Asp-211. Asp-211, Asp-235, and Asp-239 together coordinate Mg(2+). 271-283 (GSAPDIAGQGIAD) is a binding site for NAD(+).

Belongs to the isocitrate and isopropylmalate dehydrogenases family. LeuB type 2 subfamily. In terms of assembly, homodimer. Mg(2+) serves as cofactor. Mn(2+) is required as a cofactor.

It localises to the cytoplasm. It catalyses the reaction (2R,3S)-3-isopropylmalate + NAD(+) = 4-methyl-2-oxopentanoate + CO2 + NADH. The protein operates within amino-acid biosynthesis; L-leucine biosynthesis; L-leucine from 3-methyl-2-oxobutanoate: step 3/4. Functionally, catalyzes the oxidation of 3-carboxy-2-hydroxy-4-methylpentanoate (3-isopropylmalate) to 3-carboxy-4-methyl-2-oxopentanoate. The product decarboxylates to 4-methyl-2 oxopentanoate. The chain is 3-isopropylmalate dehydrogenase from Rhodococcus opacus (strain B4).